Here is a 212-residue protein sequence, read N- to C-terminus: MLYDFERTAPEPQGLGLVPMVVEQSGRGERAYDIYSRLLKERVIFLVGPVNDATANLIVAQMLFLESENPDKDIYLYINSPGGSVSAGLAIYDTMQFIKPDVSTLCIGQAASMGAFLLTAGAKGKRYCLPNSRVMIHQPLGGFQGQASDIEIHAKEILYLKARLNGMLAKHTGQSLEVIDRDTDRDNFMSAEDSVKYGLVDKVLTSRNEAGN.

The active-site Nucleophile is the serine 112. Histidine 137 is an active-site residue.

It belongs to the peptidase S14 family. As to quaternary structure, fourteen ClpP subunits assemble into 2 heptameric rings which stack back to back to give a disk-like structure with a central cavity, resembling the structure of eukaryotic proteasomes.

Its subcellular location is the cytoplasm. The catalysed reaction is Hydrolysis of proteins to small peptides in the presence of ATP and magnesium. alpha-casein is the usual test substrate. In the absence of ATP, only oligopeptides shorter than five residues are hydrolyzed (such as succinyl-Leu-Tyr-|-NHMec, and Leu-Tyr-Leu-|-Tyr-Trp, in which cleavage of the -Tyr-|-Leu- and -Tyr-|-Trp bonds also occurs).. Cleaves peptides in various proteins in a process that requires ATP hydrolysis. Has a chymotrypsin-like activity. Plays a major role in the degradation of misfolded proteins. This Thiobacillus denitrificans (strain ATCC 25259 / T1) protein is ATP-dependent Clp protease proteolytic subunit.